Consider the following 356-residue polypeptide: 3-dehydroquinate synthase (356 aa).

Residues 106–110, 130–131, K143, K152, and 170–173 contribute to the NAD(+) site; these read GVVGD, TS, and FLKT. Residues E185, H246, and H263 each coordinate Zn(2+).

This sequence belongs to the sugar phosphate cyclases superfamily. Dehydroquinate synthase family. The cofactor is NAD(+). Requires Co(2+) as cofactor. Zn(2+) serves as cofactor.

It localises to the cytoplasm. The enzyme catalyses 7-phospho-2-dehydro-3-deoxy-D-arabino-heptonate = 3-dehydroquinate + phosphate. It participates in metabolic intermediate biosynthesis; chorismate biosynthesis; chorismate from D-erythrose 4-phosphate and phosphoenolpyruvate: step 2/7. In terms of biological role, catalyzes the conversion of 3-deoxy-D-arabino-heptulosonate 7-phosphate (DAHP) to dehydroquinate (DHQ). In Clostridium acetobutylicum (strain ATCC 824 / DSM 792 / JCM 1419 / IAM 19013 / LMG 5710 / NBRC 13948 / NRRL B-527 / VKM B-1787 / 2291 / W), this protein is 3-dehydroquinate synthase.